We begin with the raw amino-acid sequence, 293 residues long: Acetyl-coenzyme A carboxylase carboxyl transferase subunit beta (293 aa).

The CoA carboxyltransferase N-terminal domain occupies 29–293; sequence LWVKCSECSQ…GVNELVEANI (265 aa). The Zn(2+) site is built by Cys33, Cys36, Cys52, and Cys55. Residues 33 to 55 form a C4-type zinc finger; the sequence is CSECSQVAYRKDLISNFNVCSNC.

This sequence belongs to the AccD/PCCB family. Acetyl-CoA carboxylase is a heterohexamer composed of biotin carboxyl carrier protein (AccB), biotin carboxylase (AccC) and two subunits each of ACCase subunit alpha (AccA) and ACCase subunit beta (AccD). Requires Zn(2+) as cofactor.

It is found in the cytoplasm. The enzyme catalyses N(6)-carboxybiotinyl-L-lysyl-[protein] + acetyl-CoA = N(6)-biotinyl-L-lysyl-[protein] + malonyl-CoA. It functions in the pathway lipid metabolism; malonyl-CoA biosynthesis; malonyl-CoA from acetyl-CoA: step 1/1. Functionally, component of the acetyl coenzyme A carboxylase (ACC) complex. Biotin carboxylase (BC) catalyzes the carboxylation of biotin on its carrier protein (BCCP) and then the CO(2) group is transferred by the transcarboxylase to acetyl-CoA to form malonyl-CoA. This Prochlorococcus marinus (strain MIT 9215) protein is Acetyl-coenzyme A carboxylase carboxyl transferase subunit beta.